A 293-amino-acid polypeptide reads, in one-letter code: Ribonuclease H2 subunit B (293 aa).

Residues 251–278 are disordered; the sequence is KRPQNSDITSSLLKKPNRKQATKKSKYF. Residues 265 to 276 are compositionally biased toward basic residues; the sequence is KPNRKQATKKSK.

Belongs to the RNase H2 subunit B family. Component of the RNase H2 complex.

The protein resides in the nucleus. Its subcellular location is the cytoplasm. Functionally, non catalytic subunit of RNase H2, an endonuclease that specifically degrades the RNA of RNA:DNA hybrids. Participates in DNA replication, possibly by mediating the removal of lagging-strand Okazaki fragment RNA primers during DNA replication. Mediates the excision of single ribonucleotides from DNA:RNA duplexes. The chain is Ribonuclease H2 subunit B (rnh202) from Schizosaccharomyces pombe (strain 972 / ATCC 24843) (Fission yeast).